The primary structure comprises 493 residues: ATP synthase subunit beta, chloroplastic (493 aa).

Residue 170-177 (GGAGVGKT) coordinates ATP.

Belongs to the ATPase alpha/beta chains family. F-type ATPases have 2 components, CF(1) - the catalytic core - and CF(0) - the membrane proton channel. CF(1) has five subunits: alpha(3), beta(3), gamma(1), delta(1), epsilon(1). CF(0) has four main subunits: a(1), b(1), b'(1) and c(9-12).

The protein resides in the plastid. Its subcellular location is the chloroplast thylakoid membrane. The catalysed reaction is ATP + H2O + 4 H(+)(in) = ADP + phosphate + 5 H(+)(out). Its function is as follows. Produces ATP from ADP in the presence of a proton gradient across the membrane. The catalytic sites are hosted primarily by the beta subunits. The sequence is that of ATP synthase subunit beta, chloroplastic from Adiantum capillus-veneris (Maidenhair fern).